Reading from the N-terminus, the 79-residue chain is Acyl carrier protein (79 aa).

A Carrier domain is found at 2–77; it reads ESIEQRVKKI…QAVDYINSHG (76 aa). The residue at position 37 (S37) is an O-(pantetheine 4'-phosphoryl)serine.

This sequence belongs to the acyl carrier protein (ACP) family. In terms of processing, 4'-phosphopantetheine is transferred from CoA to a specific serine of apo-ACP by AcpS. This modification is essential for activity because fatty acids are bound in thioester linkage to the sulfhydryl of the prosthetic group.

The protein resides in the cytoplasm. The protein operates within lipid metabolism; fatty acid biosynthesis. In terms of biological role, carrier of the growing fatty acid chain in fatty acid biosynthesis. This is Acyl carrier protein from Bordetella parapertussis (strain 12822 / ATCC BAA-587 / NCTC 13253).